Reading from the N-terminus, the 388-residue chain is LL-diaminopimelate aminotransferase (388 aa).

Substrate contacts are provided by Tyr16 and Gly41. Pyridoxal 5'-phosphate is bound by residues Tyr70, 104–105 (SK), Tyr129, Asn179, Tyr210, and 239–241 (SLS). Substrate contacts are provided by Lys105, Tyr129, and Asn179. The residue at position 242 (Lys242) is an N6-(pyridoxal phosphate)lysine. A pyridoxal 5'-phosphate-binding site is contributed by Arg250. A substrate-binding site is contributed by Arg368.

It belongs to the class-I pyridoxal-phosphate-dependent aminotransferase family. LL-diaminopimelate aminotransferase subfamily. In terms of assembly, homodimer. The cofactor is pyridoxal 5'-phosphate.

It carries out the reaction (2S,6S)-2,6-diaminopimelate + 2-oxoglutarate = (S)-2,3,4,5-tetrahydrodipicolinate + L-glutamate + H2O + H(+). The protein operates within amino-acid biosynthesis; L-lysine biosynthesis via DAP pathway; LL-2,6-diaminopimelate from (S)-tetrahydrodipicolinate (aminotransferase route): step 1/1. In terms of biological role, involved in the synthesis of meso-diaminopimelate (m-DAP or DL-DAP), required for both lysine and peptidoglycan biosynthesis. Catalyzes the direct conversion of tetrahydrodipicolinate to LL-diaminopimelate. This Nitratidesulfovibrio vulgaris (strain DP4) (Desulfovibrio vulgaris) protein is LL-diaminopimelate aminotransferase.